A 101-amino-acid polypeptide reads, in one-letter code: Urease subunit beta (101 aa).

The protein belongs to the urease beta subunit family. As to quaternary structure, heterotrimer of UreA (gamma), UreB (beta) and UreC (alpha) subunits. Three heterotrimers associate to form the active enzyme.

The protein resides in the cytoplasm. The enzyme catalyses urea + 2 H2O + H(+) = hydrogencarbonate + 2 NH4(+). It participates in nitrogen metabolism; urea degradation; CO(2) and NH(3) from urea (urease route): step 1/1. The chain is Urease subunit beta from Cereibacter sphaeroides (strain ATCC 17025 / ATH 2.4.3) (Rhodobacter sphaeroides).